We begin with the raw amino-acid sequence, 345 residues long: Phosphoribosylformylglycinamidine cyclo-ligase (345 aa).

This sequence belongs to the AIR synthase family.

It localises to the cytoplasm. The catalysed reaction is 2-formamido-N(1)-(5-O-phospho-beta-D-ribosyl)acetamidine + ATP = 5-amino-1-(5-phospho-beta-D-ribosyl)imidazole + ADP + phosphate + H(+). The protein operates within purine metabolism; IMP biosynthesis via de novo pathway; 5-amino-1-(5-phospho-D-ribosyl)imidazole from N(2)-formyl-N(1)-(5-phospho-D-ribosyl)glycinamide: step 2/2. The polypeptide is Phosphoribosylformylglycinamidine cyclo-ligase (Aeromonas salmonicida (strain A449)).